The primary structure comprises 395 residues: 1-deoxy-D-xylulose 5-phosphate reductoisomerase (395 aa).

Residues Thr15, Gly16, Ser17, Ile18, Gly41, Asn43, and Asn126 each contribute to the NADPH site. Position 127 (Lys127) interacts with 1-deoxy-D-xylulose 5-phosphate. Glu128 contributes to the NADPH binding site. Asp152 provides a ligand contact to Mn(2+). 1-deoxy-D-xylulose 5-phosphate-binding residues include Ser153, Glu154, Ser178, and His201. Glu154 contacts Mn(2+). Gly207 provides a ligand contact to NADPH. 1-deoxy-D-xylulose 5-phosphate contacts are provided by Ser214, Asn219, Lys220, and Glu223. A Mn(2+)-binding site is contributed by Glu223.

It belongs to the DXR family. Requires Mg(2+) as cofactor. Mn(2+) serves as cofactor.

It catalyses the reaction 2-C-methyl-D-erythritol 4-phosphate + NADP(+) = 1-deoxy-D-xylulose 5-phosphate + NADPH + H(+). The protein operates within isoprenoid biosynthesis; isopentenyl diphosphate biosynthesis via DXP pathway; isopentenyl diphosphate from 1-deoxy-D-xylulose 5-phosphate: step 1/6. Catalyzes the NADPH-dependent rearrangement and reduction of 1-deoxy-D-xylulose-5-phosphate (DXP) to 2-C-methyl-D-erythritol 4-phosphate (MEP). This Ruegeria sp. (strain TM1040) (Silicibacter sp.) protein is 1-deoxy-D-xylulose 5-phosphate reductoisomerase.